Reading from the N-terminus, the 240-residue chain is Peptidyl-tRNA hydrolase (240 aa).

Tyr-14 lines the tRNA pocket. The Proton acceptor role is filled by His-19. 3 residues coordinate tRNA: Phe-64, Asn-66, and Asn-112. A disordered region spans residues 196 to 227; it reads EKPAQKQQPKQQSHIRQARSQQAPAKLPETGP. Polar residues predominate over residues 209-218; it reads HIRQARSQQA.

The protein belongs to the PTH family. Monomer.

Its subcellular location is the cytoplasm. It carries out the reaction an N-acyl-L-alpha-aminoacyl-tRNA + H2O = an N-acyl-L-amino acid + a tRNA + H(+). In terms of biological role, hydrolyzes ribosome-free peptidyl-tRNAs (with 1 or more amino acids incorporated), which drop off the ribosome during protein synthesis, or as a result of ribosome stalling. Catalyzes the release of premature peptidyl moieties from peptidyl-tRNA molecules trapped in stalled 50S ribosomal subunits, and thus maintains levels of free tRNAs and 50S ribosomes. The sequence is that of Peptidyl-tRNA hydrolase from Mesorhizobium japonicum (strain LMG 29417 / CECT 9101 / MAFF 303099) (Mesorhizobium loti (strain MAFF 303099)).